The primary structure comprises 696 residues: Macrolide export ATP-binding/permease protein MacB (696 aa).

One can recognise an ABC transporter domain in the interval 6–244 (IELKNIERYH…KPQNKRTFID (239 aa)). ATP is bound at residue 42–49 (GASGSGKS). The segment at 254–287 (HNTEKLNRPNEKNNIDNDNKENNNGYNRNDNSFL) is disordered. The segment covering 255 to 274 (NTEKLNRPNEKNNIDNDNKE) has biased composition (basic and acidic residues). Over residues 275–284 (NNNGYNRNDN) the composition is skewed to low complexity. 4 consecutive transmembrane segments (helical) span residues 324–344 (FLTMLGIIIGIIAVVFVIALG), 576–596 (IAFISLIVGGIGIMNIMLVSV), 626–646 (MVSLIGGCIGVGCALLFGGLF), and 659–679 (LSSFLIAFLCSSMIGIVFGYF).

Belongs to the ABC transporter superfamily. Macrolide exporter (TC 3.A.1.122) family. Homodimer. Part of the tripartite efflux system MacAB-TolC, which is composed of an inner membrane transporter, MacB, a periplasmic membrane fusion protein, MacA, and an outer membrane component, TolC. The complex forms a large protein conduit and can translocate molecules across both the inner and outer membranes. Interacts with MacA.

Its subcellular location is the cell inner membrane. Its function is as follows. Part of the tripartite efflux system MacAB-TolC. MacB is a non-canonical ABC transporter that contains transmembrane domains (TMD), which form a pore in the inner membrane, and an ATP-binding domain (NBD), which is responsible for energy generation. Confers resistance against macrolides. The sequence is that of Macrolide export ATP-binding/permease protein MacB from Haemophilus ducreyi (strain 35000HP / ATCC 700724).